We begin with the raw amino-acid sequence, 813 residues long: Ribonuclease R (813 aa).

The region spanning 260-587 (RVDLRDLPLV…LHRAIKYLLA (328 aa)) is the RNB domain. Lys-544 carries the N6-acetyllysine modification. Residues 644-725 (GNVFKGVISS…DERKIDFSLI (82 aa)) enclose the S1 motif domain. The interval 733–813 (NVGKTAREKA…KRAAKKKVAE (81 aa)) is disordered. 2 stretches are compositionally biased toward basic and acidic residues: residues 737-749 (TARE…DAGK) and 761-774 (VNFE…GEKK). Residues 775 to 791 (TKPKAAKKDARKAKKPS) are compositionally biased toward basic residues. Low complexity predominate over residues 792–801 (AKTQKIAAAT). A compositionally biased stretch (basic residues) spans 802-813 (KAKRAAKKKVAE).

The protein belongs to the RNR ribonuclease family. RNase R subfamily. Monomer.

It is found in the cytoplasm. It carries out the reaction Exonucleolytic cleavage in the 3'- to 5'-direction to yield nucleoside 5'-phosphates.. In terms of biological role, 3'-5' exoribonuclease that releases 5'-nucleoside monophosphates and is involved in maturation of structured RNAs. Required for the expression of virulence genes on the large plasmid of S.flexneri at the post-transcriptional level. The protein is Ribonuclease R of Shigella flexneri.